The primary structure comprises 194 residues: Pyridoxine/pyridoxamine 5'-phosphate oxidase (194 aa).

Residues 42–47, 57–58, Arg-63, Lys-64, and Gln-86 each bind FMN; these read RVVLLK and FT. Lys-47 serves as a coordination point for substrate. The substrate site is built by Tyr-104, Arg-108, and Ser-112. FMN-binding positions include 121–122 and Trp-166; that span reads QS. 172–174 contacts substrate; the sequence is RIH. Arg-176 provides a ligand contact to FMN.

Belongs to the pyridoxamine 5'-phosphate oxidase family. As to quaternary structure, homodimer. It depends on FMN as a cofactor.

It carries out the reaction pyridoxamine 5'-phosphate + O2 + H2O = pyridoxal 5'-phosphate + H2O2 + NH4(+). It catalyses the reaction pyridoxine 5'-phosphate + O2 = pyridoxal 5'-phosphate + H2O2. It functions in the pathway cofactor metabolism; pyridoxal 5'-phosphate salvage; pyridoxal 5'-phosphate from pyridoxamine 5'-phosphate: step 1/1. Its pathway is cofactor metabolism; pyridoxal 5'-phosphate salvage; pyridoxal 5'-phosphate from pyridoxine 5'-phosphate: step 1/1. Catalyzes the oxidation of either pyridoxine 5'-phosphate (PNP) or pyridoxamine 5'-phosphate (PMP) into pyridoxal 5'-phosphate (PLP). The polypeptide is Pyridoxine/pyridoxamine 5'-phosphate oxidase (Ehrlichia ruminantium (strain Welgevonden)).